The sequence spans 151 residues: uncharacterized protein (151 aa).

To B.subtilis pcf and to sigma factors.

This is an uncharacterized protein from Bacillus subtilis (strain 168).